We begin with the raw amino-acid sequence, 503 residues long: Glutamate/gamma-aminobutyrate antiporter (503 aa).

Residue 33–43 participates in L-glutamate binding; the sequence is LHLVFFLLLGG. 7 consecutive transmembrane segments (helical) span residues 35–55, 153–173, 194–214, 232–252, 366–386, 407–427, and 440–460; these read LVFF…LCAA, FVVG…AYFI, VSTL…EASA, ILLV…VAAV, LTVV…FVLI, IIAG…FVPP, and MILL…YELH.

Belongs to the amino acid-polyamine-organocation (APC) superfamily. Glutamate:GABA antiporter (GGA) (TC 2.A.3.7) family.

The protein resides in the cell membrane. The catalysed reaction is 4-aminobutanoate(in) + L-glutamate(out) = 4-aminobutanoate(out) + L-glutamate(in). In terms of biological role, involved in glutaminase-dependent acid resistance. Exchanges extracellular glutamate (Glu) for intracellular gamma-aminobutyric acid (GABA) under acidic conditions. The chain is Glutamate/gamma-aminobutyrate antiporter (gadC) from Lactococcus lactis subsp. lactis (strain IL1403) (Streptococcus lactis).